The chain runs to 427 residues: Serine hydroxymethyltransferase (427 aa).

122 to 124 (GHI) contributes to the (6S)-5,6,7,8-tetrahydrofolate binding site. K228 carries the post-translational modification N6-(pyridoxal phosphate)lysine.

This sequence belongs to the SHMT family. In terms of assembly, homodimer. It depends on pyridoxal 5'-phosphate as a cofactor.

The protein localises to the cytoplasm. The protein operates within amino-acid biosynthesis; glycine biosynthesis; glycine from L-serine: step 1/1. Functionally, catalyzes the reversible interconversion of serine and glycine with a modified folate serving as the one-carbon carrier. Also exhibits a pteridine-independent aldolase activity toward beta-hydroxyamino acids, producing glycine and aldehydes, via a retro-aldol mechanism. The sequence is that of Serine hydroxymethyltransferase from Thermococcus onnurineus (strain NA1).